The primary structure comprises 284 residues: Interferon antagonist OPG040 (284 aa).

ANK repeat units follow at residues 29-58 (HGHS…LKNL), 60-89 (ENEF…DDSQ), 93-122 (KGNT…RLMF), 127-157 (GWKT…TFDL), 159-188 (ILLS…STNT), and 193-222 (LFIP…NIYS).

It belongs to the orthopoxvirus OPG039 family.

It localises to the host cytoplasm. It is found in the host nucleus. Its function is as follows. Inhibits antiviral activity induced by type I interferons. Does not block signal transduction of IFN, but is important to counter the host antiviral state induced by a pre-treatment with IFN. Plays a role in the inhibition of host NF-kappa-B activation by preventing the acetylation of the RELA/p65 subunit of NF-kappaB. In Bos taurus (Bovine), this protein is Interferon antagonist OPG040 (OPG039).